We begin with the raw amino-acid sequence, 1179 residues long: Pesticidal crystal protein Cry1Ad (1179 aa).

This sequence belongs to the delta endotoxin family.

Its function is as follows. Promotes colloidosmotic lysis by binding to the midgut epithelial cells of many lepidopteran larvae. This is Pesticidal crystal protein Cry1Ad (cry1Ad) from Bacillus thuringiensis subsp. aizawai.